The sequence spans 547 residues: Chaperonin GroEL (547 aa).

Residues 30-33 (TLGP), Lys-51, 87-91 (DGTTT), Gly-415, and Asp-496 each bind ATP.

Belongs to the chaperonin (HSP60) family. Forms a cylinder of 14 subunits composed of two heptameric rings stacked back-to-back. Interacts with the co-chaperonin GroES.

The protein resides in the cytoplasm. The catalysed reaction is ATP + H2O + a folded polypeptide = ADP + phosphate + an unfolded polypeptide.. Functionally, together with its co-chaperonin GroES, plays an essential role in assisting protein folding. The GroEL-GroES system forms a nano-cage that allows encapsulation of the non-native substrate proteins and provides a physical environment optimized to promote and accelerate protein folding. The chain is Chaperonin GroEL from Mannheimia succiniciproducens (strain KCTC 0769BP / MBEL55E).